Consider the following 606-residue polypeptide: Vitamin B12 transporter BtuB (606 aa).

The signal sequence occupies residues 1–21 (MKKTLLAVALAPLCLPSQVFA). Positions 28 to 35 (DVMVVTAN) match the TonB box motif. Positions 40–152 (PIKNVIAPIS…IGGVLNIITA (113 aa)) constitute a TBDR plug domain. Residues 157–606 (ESVAEVTAGG…SYYATATYKF (450 aa)) form the TBDR beta-barrel domain. The TonB C-terminal box signature appears at 589–606 (ETYNVQERSYYATATYKF).

Belongs to the TonB-dependent receptor family. BtuB (TC 1.B.14.3.1) subfamily.

It localises to the cell outer membrane. Functionally, involved in the active translocation of vitamin B12 (cyanocobalamin) across the outer membrane to the periplasmic space. It derives its energy for transport by interacting with the trans-periplasmic membrane protein TonB. The polypeptide is Vitamin B12 transporter BtuB (Photobacterium profundum (strain SS9)).